The following is a 118-amino-acid chain: NADH dehydrogenase [ubiquinone] iron-sulfur protein 5-A (118 aa).

Positions 46 to 87 (KGRCYDFWMDFSECMSHCREPKDCTLLREDYLECLHHSKEFQ) constitute a CHCH domain. 2 short sequence motifs (cx9C motif) span residues 49-59 (CYDFWMDFSEC) and 69-79 (CTLLREDYLEC). Cystine bridges form between C49–C79 and C59–C69. Residues 98–118 (RKLRAASRKGEEAGDGTHNHH) form a disordered region.

The protein belongs to the complex I NDUFS5 subunit family. Complex I is composed of at least 49 different subunits. This is a component of the iron-sulfur (IP) fragment of the enzyme.

Its subcellular location is the mitochondrion. It localises to the mitochondrion inner membrane. The protein resides in the mitochondrion intermembrane space. Functionally, accessory subunit of the mitochondrial membrane respiratory chain NADH dehydrogenase (Complex I), that is believed not to be involved in catalysis. Complex I functions in the transfer of electrons from NADH to the respiratory chain. The immediate electron acceptor for the enzyme is believed to be ubiquinone. This chain is NADH dehydrogenase [ubiquinone] iron-sulfur protein 5-A, found in Arabidopsis thaliana (Mouse-ear cress).